The sequence spans 120 residues: Ribonuclease P protein component (120 aa).

This sequence belongs to the RnpA family. Consists of a catalytic RNA component (M1 or rnpB) and a protein subunit.

The enzyme catalyses Endonucleolytic cleavage of RNA, removing 5'-extranucleotides from tRNA precursor.. Its function is as follows. RNaseP catalyzes the removal of the 5'-leader sequence from pre-tRNA to produce the mature 5'-terminus. It can also cleave other RNA substrates such as 4.5S RNA. The protein component plays an auxiliary but essential role in vivo by binding to the 5'-leader sequence and broadening the substrate specificity of the ribozyme. This is Ribonuclease P protein component from Mycobacterium marinum (strain ATCC BAA-535 / M).